Consider the following 673-residue polypeptide: UvrABC system protein B (673 aa).

The Helicase ATP-binding domain occupies 26 to 415 (EGLEDGLAHQ…GDVVDQVVRP (390 aa)). An ATP-binding site is contributed by 39–46 (GVTGSGKT). The Beta-hairpin motif lies at 92–115 (YYDYYQPEAYVPSSDTFIEKDASV). The region spanning 431–597 (QVDDLLSEIR…GLNKKVVDIL (167 aa)) is the Helicase C-terminal domain. The segment at 608-627 (AKGRGKSRPIVEPDNVPMDM) is disordered. The UVR domain occupies 633 to 668 (QQKIHELEGLMMQHAQNLEFEEAAQIRDQLHQLREL).

This sequence belongs to the UvrB family. In terms of assembly, forms a heterotetramer with UvrA during the search for lesions. Interacts with UvrC in an incision complex.

It localises to the cytoplasm. Functionally, the UvrABC repair system catalyzes the recognition and processing of DNA lesions. A damage recognition complex composed of 2 UvrA and 2 UvrB subunits scans DNA for abnormalities. Upon binding of the UvrA(2)B(2) complex to a putative damaged site, the DNA wraps around one UvrB monomer. DNA wrap is dependent on ATP binding by UvrB and probably causes local melting of the DNA helix, facilitating insertion of UvrB beta-hairpin between the DNA strands. Then UvrB probes one DNA strand for the presence of a lesion. If a lesion is found the UvrA subunits dissociate and the UvrB-DNA preincision complex is formed. This complex is subsequently bound by UvrC and the second UvrB is released. If no lesion is found, the DNA wraps around the other UvrB subunit that will check the other stand for damage. In Escherichia coli O6:H1 (strain CFT073 / ATCC 700928 / UPEC), this protein is UvrABC system protein B.